The chain runs to 273 residues: MAIVKCKPTSPGRRHVVKIVNQDLYKGKPFAALLDKKDKSGGRNNNGRITTRHIGGGHKQHYRIVDFKRDKDGIPAKVERLEYDPNRTANIALVLYADGERRYILAPKGLKAGDAIASGADAAIKVGNTLPMRNIPVGSTVHAVEMKPGKGAQLARSAGTFIQILAREGNYVTLRLRSGEVRKVLAECRATIGEVGNSEHMLRQLGKAGANRWRGIRPTVRGMAMNPVDHPHGGGEGRNKGMQPVSPWGQKAKGFKTRKNKRTDKYIVRRRNK.

2 disordered regions span residues 35–54 (DKKD…TRHI) and 222–273 (GMAM…RRNK). A compositionally biased stretch (basic and acidic residues) spans 229-239 (DHPHGGGEGRN). A compositionally biased stretch (basic residues) spans 253 to 273 (KGFKTRKNKRTDKYIVRRRNK).

It belongs to the universal ribosomal protein uL2 family. In terms of assembly, part of the 50S ribosomal subunit. Forms a bridge to the 30S subunit in the 70S ribosome.

In terms of biological role, one of the primary rRNA binding proteins. Required for association of the 30S and 50S subunits to form the 70S ribosome, for tRNA binding and peptide bond formation. It has been suggested to have peptidyltransferase activity; this is somewhat controversial. Makes several contacts with the 16S rRNA in the 70S ribosome. The sequence is that of Large ribosomal subunit protein uL2 from Aeromonas hydrophila subsp. hydrophila (strain ATCC 7966 / DSM 30187 / BCRC 13018 / CCUG 14551 / JCM 1027 / KCTC 2358 / NCIMB 9240 / NCTC 8049).